An 898-amino-acid polypeptide reads, in one-letter code: Cilium assembly protein DZIP1 (898 aa).

Residues 14 to 66 (DPPGTHSSAGIPSLLSSPQSQPSSGSQSRPAPSTMSGPLTSSGASTSIPPPFK) are disordered. The segment covering 25 to 46 (PSLLSSPQSQPSSGSQSRPAPS) has biased composition (low complexity). The segment covering 47 to 60 (TMSGPLTSSGASTS) has biased composition (polar residues). Positions 145–197 (LSISLQAAEERLLAEAREREQICVQLQKKTQDAKALKEELKQRKKIIASQQAM) form a coiled coil. A C2H2-type zinc finger spans residues 207–230 (HKCQHCEKAFMNASFLQSHMQRRH). 2 coiled-coil regions span residues 242 to 353 (NQKK…VQTQ) and 407 to 447 (SAVS…ISSK). Polar residues predominate over residues 435 to 463 (TSQNKQMKQISSKPPTITVQREGVSTPSP). Disordered stretches follow at residues 435–509 (TSQN…SWQK), 585–739 (EQRV…WTDG), and 773–878 (KSLE…DAGT). Residues 495-505 (SSISESPTENR) show a composition bias toward low complexity. Positions 573–590 (YRRALKEISHKLEQRVKE) form a coiled coil. Polar residues predominate over residues 605–652 (VVQSRPRSSSFPSTVTRVMSGPASKQQRTPQPVPRSRTNVPHKTSTPL). Positions 662–684 (SDEDSSEEEEEEEEEEESSDEES) are enriched in acidic residues. Polar residues-rich tracts occupy residues 685–715 (PQMQ…QSVR) and 723–734 (AEPTNVTTLSDS). Residues 797 to 815 (KPTDVRNTRQNAKKELKYS) are compositionally biased toward basic and acidic residues. Residues 816 to 826 (DDDDDDDDDWD) show a composition bias toward acidic residues. Residues 855-866 (DTSTSVWGSSTG) show a composition bias toward polar residues.

It belongs to the DZIP C2H2-type zinc-finger protein family. In terms of tissue distribution, expressed throughout the embryo starting at 12 hours.

The protein resides in the cell projection. Its subcellular location is the cilium. The protein localises to the cytoplasm. It localises to the cytoskeleton. It is found in the cilium basal body. The protein resides in the microtubule organizing center. Its subcellular location is the centrosome. The protein localises to the centriole. It localises to the nucleus. Molecular adapter that recruits protein complexes required for cilium assembly and function to the cilium basal body. Required for establishment of left-right asymmetry during embryogenesis. Acts as a permissive factor that is required for the proper regulation of Hedgehog (Hh) target genes in response to Hh signals. Acts downstream of the Smoothened protein to modulate Gli activity in the somites of the developing embryo. In Danio rerio (Zebrafish), this protein is Cilium assembly protein DZIP1 (dzip1).